Here is a 192-residue protein sequence, read N- to C-terminus: Putative 3-methyladenine DNA glycosylase (192 aa).

The protein belongs to the DNA glycosylase MPG family.

The chain is Putative 3-methyladenine DNA glycosylase from Methanoculleus marisnigri (strain ATCC 35101 / DSM 1498 / JR1).